A 55-amino-acid chain; its full sequence is MAKSNTVQIKLVSTADTGFFYVTKKNARAQTGKLEFRKYDPVVRKHVTFKEAKIK.

Belongs to the bacterial ribosomal protein bL33 family.

The sequence is that of Large ribosomal subunit protein bL33 from Granulibacter bethesdensis (strain ATCC BAA-1260 / CGDNIH1).